The chain runs to 417 residues: Serine hydroxymethyltransferase 2 (417 aa).

Residues Leu-121 and 125 to 127 (GHL) each bind (6S)-5,6,7,8-tetrahydrofolate. Residue Lys-230 is modified to N6-(pyridoxal phosphate)lysine. A (6S)-5,6,7,8-tetrahydrofolate-binding site is contributed by 355–357 (SPF).

It belongs to the SHMT family. In terms of assembly, homodimer. Requires pyridoxal 5'-phosphate as cofactor.

Its subcellular location is the cytoplasm. It catalyses the reaction (6R)-5,10-methylene-5,6,7,8-tetrahydrofolate + glycine + H2O = (6S)-5,6,7,8-tetrahydrofolate + L-serine. It functions in the pathway one-carbon metabolism; tetrahydrofolate interconversion. The protein operates within amino-acid biosynthesis; glycine biosynthesis; glycine from L-serine: step 1/1. Functionally, catalyzes the reversible interconversion of serine and glycine with tetrahydrofolate (THF) serving as the one-carbon carrier. This reaction serves as the major source of one-carbon groups required for the biosynthesis of purines, thymidylate, methionine, and other important biomolecules. Also exhibits THF-independent aldolase activity toward beta-hydroxyamino acids, producing glycine and aldehydes, via a retro-aldol mechanism. The protein is Serine hydroxymethyltransferase 2 of Pseudomonas fluorescens (strain ATCC BAA-477 / NRRL B-23932 / Pf-5).